The sequence spans 359 residues: Protein URE2 (359 aa).

Positions 39-82 (FSAGVNNNNNNSSSSNNNNNNNNNAQNNNSGRNGSQSNDNGNNI) are disordered. The span at 44–81 (NNNNNNSSSSNNNNNNNNNAQNNNSGRNGSQSNDNGNN) shows a compositional bias: low complexity. One can recognise a GST N-terminal domain in the interval 117–201 (EGYTLFSHRS…HLVNKYYKET (85 aa)). The GST C-terminal domain occupies 210-359 (DLADQSQINA…PAVIKALRGE (150 aa)).

This sequence belongs to the GST superfamily. As to quaternary structure, homodimer.

Plays an important role in the cellular response to the nitrogen source. URE2 gene plays a major part in the repression of GLN1 and GDH2 genes by glutamine, and is required for the inactivation of glutamine synthetase. URE2 gene product may catalytically inactivate GLN3 in response to an increase in the intracellular concentration of glutamine. In Saccharomyces paradoxus (Yeast), this protein is Protein URE2 (URE2).